Reading from the N-terminus, the 336-residue chain is G-protein coupled receptor homolog FPV027 (336 aa).

Residues 1-31 (MSMNNITSKMNQDSYGYFQLHMSDFTRVSLS) lie on the Extracellular side of the membrane. The N-linked (GlcNAc...) asparagine; by host glycan is linked to Asn5. Residues 32–52 (IVFTLVFLVGIIGNAVIIWFI) form a helical membrane-spanning segment. Residues 53–63 (GFKWTKTISTL) lie on the Cytoplasmic side of the membrane. A helical membrane pass occupies residues 64–84 (LFINLALADSLFLIFIPVYTV). Over 85-101 (YVLSNFHWYLGEFLCRV) the chain is Extracellular. An intrachain disulfide couples Cys99 to Cys178. The chain crosses the membrane as a helical span at residues 102-122 (SSFFFTTNMYASMFLLTFISI). Over 123–143 (DKYLTLTSHRLVYKYRKYRNY) the chain is Cytoplasmic. Residues 144–164 (YVCIGAIWCISIALGVPTLYY) traverse the membrane as a helical segment. Residues 165-200 (KRVILSSSRNETRCISYYGDDKHTAITIYRIIVCIR) lie on the Extracellular side of the membrane. Residue Asn174 is glycosylated (N-linked (GlcNAc...) asparagine; by host). The helical transmembrane segment at 201–221 (FIIGYVFPMTVILLSYALIVY) threads the bilayer. Residues 222–240 (KVKFINKPPNRSFMITTAS) lie on the Cytoplasmic side of the membrane. A helical transmembrane segment spans residues 241–261 (IFVFLACWTPHHVLNIISLYG). Residues 262-276 (LKSTSMYNYIKESIP) are Extracellular-facing. Residues 277-297 (FVNAIAFVYSAINPIIYIFVI) form a helical membrane-spanning segment. The Cytoplasmic portion of the chain corresponds to 298 to 336 (RLTSTYDSDTMDELRSALLDEETTSTEDCSDIEISDISR).

Belongs to the G-protein coupled receptor 1 family.

Its subcellular location is the host cell membrane. The protein is G-protein coupled receptor homolog FPV027 of Vertebrata (FPV).